The primary structure comprises 318 residues: tRNA methyltransferase 10 homolog B (318 aa).

Over residues 1–10 (MDCKSEESAQ) the composition is skewed to basic and acidic residues. The disordered stretch occupies residues 1–105 (MDCKSEESAQ…DPGNGTCPQH (105 aa)). Over residues 52-63 (SPANSAVWSSKN) the composition is skewed to polar residues. Positions 64-83 (MQRKQRHWERIVSSKKSKRK) are enriched in basic residues. The stretch at 72-93 (ERIVSSKKSKRKQERERRKAKR) forms a coiled coil. The segment covering 84-96 (QERERRKAKRAED) has biased composition (basic and acidic residues). Residues 114–311 (TKEKLLEAKH…KGVSPGKGYV (198 aa)) form the SAM-dependent MTase TRM10-type domain.

The protein belongs to the class IV-like SAM-binding methyltransferase superfamily. TRM10 family.

It catalyses the reaction guanosine(9) in tRNA + S-adenosyl-L-methionine = N(1)-methylguanosine(9) in tRNA + S-adenosyl-L-homocysteine + H(+). Functionally, S-adenosyl-L-methionine-dependent guanine N(1)-methyltransferase that catalyzes the formation of N(1)-methylguanine at position 9 (m1G9) in tRNAs. Probably not able to catalyze formation of N(1)-methyladenine at position 9 (m1A9) in tRNAs. The chain is tRNA methyltransferase 10 homolog B (Trmt10b) from Mus musculus (Mouse).